The sequence spans 121 residues: Large ribosomal subunit protein uL24 (121 aa).

Positions 1 to 30 (MVRIVSKQPRKQRKARYNAPNHTRGRFLSA) are disordered.

The protein belongs to the universal ribosomal protein uL24 family. Part of the 50S ribosomal subunit.

Functionally, one of two assembly initiator proteins, it binds directly to the 5'-end of the 23S rRNA, where it nucleates assembly of the 50S subunit. In terms of biological role, located at the polypeptide exit tunnel on the outside of the subunit. The chain is Large ribosomal subunit protein uL24 from Methanoculleus marisnigri (strain ATCC 35101 / DSM 1498 / JR1).